A 440-amino-acid chain; its full sequence is 3-phosphoshikimate 1-carboxyvinyltransferase (440 aa).

The 3-phosphoshikimate site is built by Lys-25, Ser-26, and Arg-30. A phosphoenolpyruvate-binding site is contributed by Lys-25. The phosphoenolpyruvate site is built by Gly-96 and Arg-124. 3-phosphoshikimate is bound by residues Ser-168, Gln-169, Asp-310, and Lys-337. Gln-169 lines the phosphoenolpyruvate pocket. Asp-310 acts as the Proton acceptor in catalysis. Positions 341, 382, and 409 each coordinate phosphoenolpyruvate.

Belongs to the EPSP synthase family. As to quaternary structure, monomer.

It localises to the cytoplasm. It catalyses the reaction 3-phosphoshikimate + phosphoenolpyruvate = 5-O-(1-carboxyvinyl)-3-phosphoshikimate + phosphate. The protein operates within metabolic intermediate biosynthesis; chorismate biosynthesis; chorismate from D-erythrose 4-phosphate and phosphoenolpyruvate: step 6/7. Catalyzes the transfer of the enolpyruvyl moiety of phosphoenolpyruvate (PEP) to the 5-hydroxyl of shikimate-3-phosphate (S3P) to produce enolpyruvyl shikimate-3-phosphate and inorganic phosphate. This Chlamydia trachomatis serovar A (strain ATCC VR-571B / DSM 19440 / HAR-13) protein is 3-phosphoshikimate 1-carboxyvinyltransferase.